The following is a 317-amino-acid chain: Phospho-N-acetylmuramoyl-pentapeptide-transferase (317 aa).

The next 9 helical transmembrane spans lie at 3–23 (VIIY…PLFI), 48–68 (GTPT…MIIM), 72–92 (LNSN…IGLI), 112–132 (FLLQ…RFGS), 141–161 (ITWT…FVAV), 171–191 (LDGL…VVSF), 193–213 (WHQY…LGFL), 238–258 (AIAL…IYVI), and 297–317 (VVSV…LSLI).

Belongs to the glycosyltransferase 4 family. MraY subfamily. It depends on Mg(2+) as a cofactor.

The protein localises to the cell membrane. The catalysed reaction is UDP-N-acetyl-alpha-D-muramoyl-L-alanyl-gamma-D-glutamyl-meso-2,6-diaminopimeloyl-D-alanyl-D-alanine + di-trans,octa-cis-undecaprenyl phosphate = di-trans,octa-cis-undecaprenyl diphospho-N-acetyl-alpha-D-muramoyl-L-alanyl-D-glutamyl-meso-2,6-diaminopimeloyl-D-alanyl-D-alanine + UMP. It participates in cell wall biogenesis; peptidoglycan biosynthesis. In terms of biological role, catalyzes the initial step of the lipid cycle reactions in the biosynthesis of the cell wall peptidoglycan: transfers peptidoglycan precursor phospho-MurNAc-pentapeptide from UDP-MurNAc-pentapeptide onto the lipid carrier undecaprenyl phosphate, yielding undecaprenyl-pyrophosphoryl-MurNAc-pentapeptide, known as lipid I. The protein is Phospho-N-acetylmuramoyl-pentapeptide-transferase of Clostridium acetobutylicum (strain ATCC 824 / DSM 792 / JCM 1419 / IAM 19013 / LMG 5710 / NBRC 13948 / NRRL B-527 / VKM B-1787 / 2291 / W).